A 489-amino-acid polypeptide reads, in one-letter code: Rhamnulokinase (489 aa).

13–17 (ASSGR) contacts ATP. Cys-68 and Cys-222 are disulfide-bonded. Substrate contacts are provided by residues Gly-83 and 236 to 238 (HDT). Catalysis depends on Asp-237, which acts as the Proton acceptor. Thr-259 provides a ligand contact to ATP. Asn-296 provides a ligand contact to substrate. Gln-304 is an ATP binding site. Cys-353 and Cys-370 are oxidised to a cystine. ATP is bound at residue Gly-402. Cys-413 and Cys-417 form a disulfide bridge.

Belongs to the rhamnulokinase family. As to quaternary structure, monomer. The cofactor is Mg(2+).

The enzyme catalyses L-rhamnulose + ATP = L-rhamnulose 1-phosphate + ADP + H(+). Its pathway is carbohydrate degradation; L-rhamnose degradation; glycerone phosphate from L-rhamnose: step 2/3. In terms of biological role, involved in the catabolism of L-rhamnose (6-deoxy-L-mannose). Catalyzes the transfer of the gamma-phosphate group from ATP to the 1-hydroxyl group of L-rhamnulose to yield L-rhamnulose 1-phosphate. This Escherichia coli (strain 55989 / EAEC) protein is Rhamnulokinase.